We begin with the raw amino-acid sequence, 207 residues long: Histone H1 (207 aa).

The segment covering 1–15 (MAEVAPAPAAAAPAK) has biased composition (low complexity). 2 disordered regions span residues 1 to 28 (MAEV…PKKA) and 105 to 207 (EAKK…PKKK). Ala-2 is subject to N-acetylalanine. Basic residues predominate over residues 16–27 (APKKKAAAKPKK). The region spanning 28–101 (AGPSVGELIV…GASGSFKLNK (74 aa)) is the H15 domain. 2 stretches are compositionally biased toward basic residues: residues 117 to 168 (KAKK…KVKK) and 175 to 207 (KAAK…PKKK).

Belongs to the histone H1/H5 family. In terms of tissue distribution, oncorhyncin II is expressed in skin.

It localises to the nucleus. The protein resides in the chromosome. It is found in the secreted. In terms of biological role, histones H1 are necessary for the condensation of nucleosome chains into higher-order structures. Oncorhyncin II has antibacterial activity against Gram-positive and Gram-negative bacteria at submicromolar concentrations. Potentially important role in mucosal defense. The protein is Histone H1 of Oncorhynchus mykiss (Rainbow trout).